The sequence spans 412 residues: Aspartate aminotransferase, cytoplasmic (412 aa).

Ala-2 is subject to N-acetylalanine. Residues Gly-38, Trp-140, and Asn-194 each coordinate L-aspartate. Residue Lys-258 is modified to N6-(pyridoxal phosphate)lysine. An L-aspartate-binding site is contributed by Arg-386.

This sequence belongs to the class-I pyridoxal-phosphate-dependent aminotransferase family. As to quaternary structure, homodimer. Pyridoxal 5'-phosphate serves as cofactor.

The protein resides in the cytoplasm. The catalysed reaction is L-aspartate + 2-oxoglutarate = oxaloacetate + L-glutamate. The enzyme catalyses L-cysteine + 2-oxoglutarate = 2-oxo-3-sulfanylpropanoate + L-glutamate. It catalyses the reaction (2S)-2-aminobutanoate + 2-oxoglutarate = 2-oxobutanoate + L-glutamate. It carries out the reaction 3-sulfino-L-alanine + 2-oxoglutarate = 3-sulfinopyruvate + L-glutamate. In terms of biological role, biosynthesis of L-glutamate from L-aspartate or L-cysteine. Important regulator of levels of glutamate, the major excitatory neurotransmitter of the vertebrate central nervous system. Acts as a scavenger of glutamate in brain neuroprotection. The aspartate aminotransferase activity is involved in hepatic glucose synthesis during development and in adipocyte glyceroneogenesis. Using L-cysteine as substrate, regulates levels of mercaptopyruvate, an important source of hydrogen sulfide. Mercaptopyruvate is converted into H(2)S via the action of 3-mercaptopyruvate sulfurtransferase (3MST). Hydrogen sulfide is an important synaptic modulator and neuroprotectant in the brain. This Gallus gallus (Chicken) protein is Aspartate aminotransferase, cytoplasmic.